Consider the following 636-residue polypeptide: MAPPLLLLLLASGAAACPLPCVCQNLSESLSTLCAHRGLLFVPPNVDRRTVELRLADNFIQALGPPDFRNMTGLVDLTLSRNAITRIGARSFGDLESLRSLHLDGNRLVELGSSSLRGPVNLQHLILSGNQLGRIAPGAFDDFLDSLEDLDVSYNNLRQVPWAGIGSMPALHTLNLDHNLIDALPPGVFAQLSQLSRLDLTSNRLATLAPDPLFSRGRDAEASPSPLVLSFSGNPLHCNCELLWLRRLARPDDLETCASPPTLAGRYFWAVPEGEFSCEPPLIARHTQRLWVLEGQRATLRCRALGDPVPTMHWVGPDDRLVGNSSRAWAFPNGTLEIGVTGAGDAGAYTCIATNPAGEATARVELRVLALPHGGNTSAEGGRPGPSDIAASARTAAEGEGTLESEPAVQVTEVTATSGLVSWGPGRPADPVWMFQIQYNSSEDETLIYRIVPASSQHFLLKHLVPGADYDLCLLALSPAAGPSDLTATRLLGCAHFSTLPATPLCHALQAHVLGGTLTVAVGGVLVAALLVFTVALLVRGRGAGNGRLPLKLSHVQSQTNGGTSPMPKSHPPRSPPPRPQRSCSLDLGDTGGCYGYARRLGGAWARRSHSVHGGLLGAGCRGMGGSAERLEESVV.

An N-terminal signal peptide occupies residues 1–16 (MAPPLLLLLLASGAAA). Residues 17–48 (CPLPCVCQNLSESLSTLCAHRGLLFVPPNVDR) enclose the LRRNT domain. The Extracellular portion of the chain corresponds to 17–518 (CPLPCVCQNL…LQAHVLGGTL (502 aa)). Asparagine 25 carries an N-linked (GlcNAc...) asparagine glycan. LRR repeat units follow at residues 49 to 70 (RTVE…DFRN), 73 to 94 (GLVD…SFGD), 97 to 118 (SLRS…SLRG), 121 to 142 (NLQH…AFDD), 146 to 169 (SLED…GSMP), 170 to 191 (ALHT…VFAQ), and 194 to 215 (QLSR…PLFS). In terms of domain architecture, LRRCT spans 234–280 (NPLHCNCELLWLRRLARPDDLETCASPPTLAGRYFWAVPEGEFSCEP). Positions 281–367 (PLIARHTQRL…GEATARVELR (87 aa)) constitute an Ig-like domain. An intrachain disulfide couples cysteine 302 to cysteine 351. N-linked (GlcNAc...) asparagine glycosylation is present at asparagine 333. A Fibronectin type-III domain is found at 405 to 502 (SEPAVQVTEV…GCAHFSTLPA (98 aa)). A helical membrane pass occupies residues 519–539 (TVAVGGVLVAALLVFTVALLV). Over 540-636 (RGRGAGNGRL…SAERLEESVV (97 aa)) the chain is Cytoplasmic. Positions 556–585 (VQSQTNGGTSPMPKSHPPRSPPPRPQRSCS) are disordered. A compositionally biased stretch (pro residues) spans 569–580 (KSHPPRSPPPRP). Phosphoserine occurs at positions 585 and 627. The PDZ-binding motif lies at 633–636 (ESVV).

Belongs to the LRFN family. As to quaternary structure, forms heteromeric complexes with LRFN1 and LRFN2. Can form heteromeric complexes with LRFN3 and LRFN5. Unable to form homophilic interactions across cell junctions. Interacts with DLG1, DLG2, DLG3 and DLG4. In terms of processing, glycosylated.

The protein resides in the membrane. Functionally, promotes neurite outgrowth in hippocampal neurons. May play a role in redistributing DLG4 to the cell periphery. The chain is Leucine-rich repeat and fibronectin type-III domain-containing protein 4 (Lrfn4) from Rattus norvegicus (Rat).